The chain runs to 238 residues: Orotidine 5'-phosphate decarboxylase (238 aa).

Residues Asp-18, Lys-40, 67–76 (DMKLLDIDNT), Thr-122, Arg-183, Gln-192, and Arg-213 contribute to the substrate site. The active-site Proton donor is the Lys-69.

Belongs to the OMP decarboxylase family. Type 1 subfamily. As to quaternary structure, homodimer.

The catalysed reaction is orotidine 5'-phosphate + H(+) = UMP + CO2. The protein operates within pyrimidine metabolism; UMP biosynthesis via de novo pathway; UMP from orotate: step 2/2. Its function is as follows. Catalyzes the decarboxylation of orotidine 5'-monophosphate (OMP) to uridine 5'-monophosphate (UMP). The sequence is that of Orotidine 5'-phosphate decarboxylase from Brucella melitensis biotype 2 (strain ATCC 23457).